A 638-amino-acid chain; its full sequence is Chaperone protein DnaK (638 aa).

At T198 the chain carries Phosphothreonine; by autocatalysis. Residues 599–638 are disordered; sequence IYESQQAEGGAEGGPSGHHDDGIVDADYEEVKDDNTKKSA. Acidic residues predominate over residues 621–630; the sequence is IVDADYEEVK.

The protein belongs to the heat shock protein 70 family.

Its function is as follows. Acts as a chaperone. This chain is Chaperone protein DnaK, found in Allorhizobium ampelinum (strain ATCC BAA-846 / DSM 112012 / S4) (Agrobacterium vitis (strain S4)).